The following is a 143-amino-acid chain: Deoxyuridine 5'-triphosphate nucleotidohydrolase (143 aa).

Residues 62 to 64 (RSG), Asn-75, and 79 to 81 (TID) each bind substrate.

Belongs to the dUTPase family. Mg(2+) is required as a cofactor.

It carries out the reaction dUTP + H2O = dUMP + diphosphate + H(+). The protein operates within pyrimidine metabolism; dUMP biosynthesis; dUMP from dCTP (dUTP route): step 2/2. This enzyme is involved in nucleotide metabolism: it produces dUMP, the immediate precursor of thymidine nucleotides and it decreases the intracellular concentration of dUTP so that uracil cannot be incorporated into DNA. This Acaryochloris marina (strain MBIC 11017) protein is Deoxyuridine 5'-triphosphate nucleotidohydrolase.